A 667-amino-acid polypeptide reads, in one-letter code: Zeaxanthin epoxidase, chloroplastic (667 aa).

Residues 1–59 (MGSTPFCYSINPSPSKLDFTRTHVFSPVSKQFYLDLSSFSGKPGGVSGFRSRRALLGVK) constitute a chloroplast transit peptide. Residues 82-110 (RVLVAGGGIGGLVFALAAKKKGFDVLVFE) and 360-373 (GFTWGKGRVTLLGD) contribute to the FAD site. The 55-residue stretch at 558-612 (CIVGSEPDQDFPGMRIVIPSSQVSKMHARVIYKDGAFFLMDLRSEHGTYVTDNEG) folds into the FHA domain.

FAD serves as cofactor. Expressed in leaves, stems and flowers, and at lower levels in roots and siliques.

It is found in the plastid. It localises to the chloroplast. It carries out the reaction all-trans-zeaxanthin + 4 reduced [2Fe-2S]-[ferredoxin] + 2 O2 + 4 H(+) = all-trans-violaxanthin + 4 oxidized [2Fe-2S]-[ferredoxin] + 2 H2O. Its pathway is plant hormone biosynthesis; abscisate biosynthesis. In terms of biological role, zeaxanthin epoxidase that plays an important role in the xanthophyll cycle and abscisic acid (ABA) biosynthesis. Converts zeaxanthin into antheraxanthin and subsequently violaxanthin. Required for resistance to osmotic and drought stresses, ABA-dependent stomatal closure, seed development and dormancy, modulation of defense gene expression and disease resistance and non-photochemical quencing (NPQ). Through its role in ABA biosynthesis, regulates the expression of stress-responsive genes such as RD29A during osmotic stress and is required for normal plant growth during vegetative development. Is required for late skotomorphogenic growth through its role in the xanthophyll carotenoids neoxanthin, violaxanthin and antheraxanthin biosynthesis. Required for beta-aminobutyric acid (BABA)-induced priming in disease resistance, tolerance to salt and drought stresses and sterility. Participates in NPQ by regulating the level of zeaxanthin in photosynthetic energy conversion. NPQ is a process that maintains the balance between dissipation and utilization of light energy to minimize the generation of oxidizing molecules and the molecular damages they can generate. The protein is Zeaxanthin epoxidase, chloroplastic (ZEP) of Arabidopsis thaliana (Mouse-ear cress).